The sequence spans 504 residues: Chromosomal replication initiator protein DnaA (504 aa).

A domain I, interacts with DnaA modulators region spans residues 1-109; that stretch reads MTADPDPPFV…PTDEPEDAPD (109 aa). A disordered region spans residues 98 to 162; it reads ATPTDEPEDA…PDTSSDDSNA (65 aa). The span at 109–125 shows a compositional bias: low complexity; that stretch reads DSFADSPAPASVPAGPA. A domain II region spans residues 110 to 163; sequence SFADSPAPASVPAGPADADEIDDDRDARVNAQESWPKYFSRPEPDTSSDDSNAV. A domain III, AAA+ region region spans residues 164–380; sequence NLNRRYTFDT…GALIRVTAFA (217 aa). ATP is bound by residues Gly208, Gly210, Lys211, and Thr212. The interval 381 to 504 is domain IV, binds dsDNA; sequence SLNKTRIDRS…TTRIRQRAKR (124 aa).

Belongs to the DnaA family. Oligomerizes as a right-handed, spiral filament on DNA at oriC.

The protein resides in the cytoplasm. Functionally, plays an essential role in the initiation and regulation of chromosomal replication. ATP-DnaA binds to the origin of replication (oriC) to initiate formation of the DNA replication initiation complex once per cell cycle. Binds the DnaA box (a 9 base pair repeat at the origin) and separates the double-stranded (ds)DNA. Forms a right-handed helical filament on oriC DNA; dsDNA binds to the exterior of the filament while single-stranded (ss)DNA is stabiized in the filament's interior. The ATP-DnaA-oriC complex binds and stabilizes one strand of the AT-rich DNA unwinding element (DUE), permitting loading of DNA polymerase. After initiation quickly degrades to an ADP-DnaA complex that is not apt for DNA replication. Binds acidic phospholipids. In terms of biological role, the probable consensus sequence for the DnaA box of this bacterium is 5'-TT(G/C)TCCACA-3'. The polypeptide is Chromosomal replication initiator protein DnaA (Mycolicibacterium smegmatis (strain ATCC 700084 / mc(2)155) (Mycobacterium smegmatis)).